We begin with the raw amino-acid sequence, 150 residues long: Small heat shock protein IbpB (150 aa).

The sHSP domain occupies 26–137; it reads SQEPIDFPPY…QPQRIAIGGG (112 aa).

This sequence belongs to the small heat shock protein (HSP20) family. Homodimer. Forms homomultimers of about 100-150 subunits at optimal growth temperatures. Conformation changes to oligomers at high temperatures or high ionic concentrations. The decrease in size of the multimers is accompanied by an increase in chaperone activity.

It localises to the cytoplasm. Its function is as follows. Associates with aggregated proteins, together with IbpA, to stabilize and protect them from irreversible denaturation and extensive proteolysis during heat shock and oxidative stress. Aggregated proteins bound to the IbpAB complex are more efficiently refolded and reactivated by the ATP-dependent chaperone systems ClpB and DnaK/DnaJ/GrpE. Its activity is ATP-independent. The protein is Small heat shock protein IbpB of Pectobacterium atrosepticum (strain SCRI 1043 / ATCC BAA-672) (Erwinia carotovora subsp. atroseptica).